The sequence spans 342 residues: GTPase Obg (342 aa).

An Obg domain is found at 1–159; the sequence is MQFIDQAQIE…KLLRLELKLL (159 aa). Positions 160-330 constitute an OBG-type G domain; it reads AEVGIIGLPN…MLQEVWGILD (171 aa). GTP-binding positions include 166-173, 191-195, 213-216, 280-283, and 311-313; these read GLPNAGKS, FTTLI, DIPG, NKID, and SAV. Mg(2+)-binding residues include Ser173 and Thr193.

It belongs to the TRAFAC class OBG-HflX-like GTPase superfamily. OBG GTPase family. As to quaternary structure, monomer. It depends on Mg(2+) as a cofactor.

The protein resides in the cytoplasm. An essential GTPase which binds GTP, GDP and possibly (p)ppGpp with moderate affinity, with high nucleotide exchange rates and a fairly low GTP hydrolysis rate. Plays a role in control of the cell cycle, stress response, ribosome biogenesis and in those bacteria that undergo differentiation, in morphogenesis control. This chain is GTPase Obg, found in Trichormus variabilis (strain ATCC 29413 / PCC 7937) (Anabaena variabilis).